Consider the following 239-residue polypeptide: Proteasome activator complex subunit 2 (239 aa).

Alanine 2 carries the N-acetylalanine modification. The residue at position 10 (serine 10) is a Phosphoserine. The disordered stretch occupies residues 65–86 (DIPIPDPPPKDDEMETDKQEKK). Basic and acidic residues predominate over residues 72-86 (PPKDDEMETDKQEKK).

The protein belongs to the PA28 family. Heterodimer of PSME1 and PSME2, which forms a hexameric ring.

In terms of biological role, implicated in immunoproteasome assembly and required for efficient antigen processing. The PA28 activator complex enhances the generation of class I binding peptides by altering the cleavage pattern of the proteasome. This chain is Proteasome activator complex subunit 2 (PSME2), found in Bos taurus (Bovine).